The primary structure comprises 396 residues: Phosphopentomutase (396 aa).

Aspartate 13, aspartate 288, histidine 293, aspartate 329, histidine 330, and histidine 341 together coordinate Mn(2+).

The protein belongs to the phosphopentomutase family. Mn(2+) serves as cofactor.

Its subcellular location is the cytoplasm. It catalyses the reaction 2-deoxy-alpha-D-ribose 1-phosphate = 2-deoxy-D-ribose 5-phosphate. The catalysed reaction is alpha-D-ribose 1-phosphate = D-ribose 5-phosphate. The protein operates within carbohydrate degradation; 2-deoxy-D-ribose 1-phosphate degradation; D-glyceraldehyde 3-phosphate and acetaldehyde from 2-deoxy-alpha-D-ribose 1-phosphate: step 1/2. In terms of biological role, isomerase that catalyzes the conversion of deoxy-ribose 1-phosphate (dRib-1-P) and ribose 1-phosphate (Rib-1-P) to deoxy-ribose 5-phosphate (dRib-5-P) and ribose 5-phosphate (Rib-5-P), respectively. This Clostridium perfringens (strain 13 / Type A) protein is Phosphopentomutase.